The primary structure comprises 454 residues: G-protein coupled receptor 39 (454 aa).

Over 1 to 34 (MASPSHPSRDCSQVIDHSHVPEFEVATWIKITLI) the chain is Extracellular. 2 disulfides stabilise this stretch: cysteine 11–cysteine 191 and cysteine 108–cysteine 210. Positions 17 and 19 each coordinate Zn(2+). The helical transmembrane segment at 35-55 (LVYLVIFVVGILGNSVTIRVT) threads the bilayer. At 56-69 (QVLQKKGYLQKEVT) the chain is on the cytoplasmic side. The helical transmembrane segment at 70 to 89 (DHMVSLACSDILVFLIGMPM) threads the bilayer. Over 90-109 (EFYSIIWNPLTTPSYTVSCK) the chain is Extracellular. A helical membrane pass occupies residues 110–131 (VHTFLFEACSYATLLHVLTLSF). The Cytoplasmic segment spans residues 132 to 151 (ERYIAICHPFRYKAMSGPCQ). A helical membrane pass occupies residues 152 to 172 (VKLLIGFVWVTSALVALPLLF). At 173 to 217 (AMGVEYPLVNVPSHRGLICNRSRTRHQEQPESSNMSICTNLSSRW) the chain is on the extracellular side. 3 N-linked (GlcNAc...) asparagine glycosylation sites follow: asparagine 192, asparagine 206, and asparagine 212. The chain crosses the membrane as a helical span at residues 218–242 (TVFQSSIFSAFVVYLVVLVSVAFMC). At 243-283 (WSMMQVLRRSKQGTLAAQGQQLQLRKLESQESRSARRQTII) the chain is on the cytoplasmic side. Residues 284–305 (FLELIVVTLAVCWMPNQVRRIM) traverse the membrane as a helical segment. Over 306–323 (AAAKPKHDWTKSYFRAYM) the chain is Extracellular. A helical transmembrane segment spans residues 324–344 (ILLPFSDTFFYLSSVVNPLLY). Over 345 to 454 (NVSSQQFRSV…TRNGFQEHEV (110 aa)) the chain is Cytoplasmic. The residue at position 397 (serine 397) is a Phosphoserine. The interval 415–454 (HSEAKPESKPQELSCESPEPNSERKPANPATRNGFQEHEV) is disordered.

The protein belongs to the G-protein coupled receptor 1 family. Interacts with HTR1A. Interacts with GALR1. In terms of tissue distribution, detected in liver, kidney, abomasum, uterus, small intestine and colon.

It localises to the cell membrane. Functionally, zinc-sensing receptor that can sense changes in extracellular Zn(2+), mediate Zn(2+) signal transmission, and participates in the regulation of numerous physiological processes including glucose homeostasis regulation, gastrointestinal mobility, hormone secretion and cell death. Activation by Zn(2+) in keratinocytes increases the intracellular concentration of Ca(2+) and activates the ERK/MAPK and PI3K/AKT signaling pathways leading to epithelial repair. Plays an essential role in normal wound healing by inducing the production of cytokines including the major inflammatory cytokine IL6 via the PKC/MAPK/CEBPB pathway. Regulates adipose tissue metabolism, especially lipolysis, and regulates the function of lipases, such as hormone-sensitive lipase and adipose triglyceride lipase. Plays a role in the inhibition of cell death and protects against oxidative, endoplasmic reticulum and mitochondrial stress by inducing secretion of the cytoprotective pigment epithelium-derived growth factor (PEDF) and probably other protective transcripts in a GNA13/RHOA/SRE-dependent manner. Forms dynamic heteroreceptor complexes with HTR1A and GALR1 depending on cell type or specific physiological states, resulting in signaling diversity: HTR1A-GPR39 shows additive increase in signaling along the serum response element (SRE) and NF-kappa-B pathways while GALR1 acts as an antagonist blocking SRE. In Bos taurus (Bovine), this protein is G-protein coupled receptor 39 (GPR39).